The chain runs to 187 residues: Elongation factor P (187 aa).

Belongs to the elongation factor P family.

It is found in the cytoplasm. The protein operates within protein biosynthesis; polypeptide chain elongation. Involved in peptide bond synthesis. Stimulates efficient translation and peptide-bond synthesis on native or reconstituted 70S ribosomes in vitro. Probably functions indirectly by altering the affinity of the ribosome for aminoacyl-tRNA, thus increasing their reactivity as acceptors for peptidyl transferase. This chain is Elongation factor P, found in Tolumonas auensis (strain DSM 9187 / NBRC 110442 / TA 4).